Here is a 280-residue protein sequence, read N- to C-terminus: Beta carbonic anhydrase 4 (280 aa).

Ala2 bears the N-acetylalanine mark. Residues 47 to 76 (NVAAAKIKALTAELKELDSSNSDAIERIKT) adopt a coiled-coil conformation. A Phosphothreonine modification is found at Thr57. Ser117 is subject to Phosphoserine. Cys223 is subject to S-nitrosocysteine.

Belongs to the beta-class carbonic anhydrase family. Interacts with DTX56. In terms of tissue distribution, strongly expressed in aerial tissues including leaves, stems, flowers and siliques. Accumulates in both guard cells and mesophyll cells.

The protein resides in the cell membrane. It catalyses the reaction hydrogencarbonate + H(+) = CO2 + H2O. Functionally, reversible hydration of carbon dioxide. Together with BCA1, involved in the CO(2) signaling pathway which controls gas-exchange between plants and the atmosphere by modulating stomatal development and movements. Promotes water use efficiency. The protein is Beta carbonic anhydrase 4 of Arabidopsis thaliana (Mouse-ear cress).